The sequence spans 260 residues: MDPIALTAAVGADLLGDGRPETLWLGIGTLLMLIGTFYFIVKGWGVTDKEAREYYSITILVPGIASAAYLSMFFGIGLTEVQVGSEMLDIYYARYADWLFTTPLLLLDLALLAKVDRVSIGTLVGVDALMIVTGLVGALSHTPLARYTWWLFSTICMIVVLYFLATSLRAAAKERGPEVASTFNTLTALVLVLWTAYPILWIIGTEGAGVVGLGIETLLFMVLDVTAKVGFGFILLRSRAILGDTEAPEPSAGAEASAAD.

The propeptide occupies 1–6 (MDPIAL). Over 7–20 (TAAVGADLLGDGRP) the chain is Extracellular. The helical transmembrane segment at 21-42 (ETLWLGIGTLLMLIGTFYFIVK) threads the bilayer. Residues 43 to 51 (GWGVTDKEA) are Cytoplasmic-facing. The chain crosses the membrane as a helical span at residues 52–73 (REYYSITILVPGIASAAYLSMF). The Extracellular portion of the chain corresponds to 74–91 (FGIGLTEVQVGSEMLDIY). A helical membrane pass occupies residues 92-113 (YARYADWLFTTPLLLLDLALLA). At 114–116 (KVD) the chain is on the cytoplasmic side. Residues 117-139 (RVSIGTLVGVDALMIVTGLVGAL) traverse the membrane as a helical segment. Over 140 to 143 (SHTP) the chain is Extracellular. Residues 144 to 172 (LARYTWWLFSTICMIVVLYFLATSLRAAA) traverse the membrane as a helical segment. The Cytoplasmic portion of the chain corresponds to 173 to 176 (KERG). Residues 177 to 204 (PEVASTFNTLTALVLVLWTAYPILWIIG) form a helical membrane-spanning segment. Topologically, residues 205–212 (TEGAGVVG) are extracellular. The chain crosses the membrane as a helical span at residues 213 to 245 (LGIETLLFMVLDVTAKVGFGFILLRSRAILGDT). Lys228 carries the N6-(retinylidene)lysine modification. Residues 246–260 (EAPEPSAGAEASAAD) lie on the Cytoplasmic side of the membrane.

The protein belongs to the archaeal/bacterial/fungal opsin family.

The protein resides in the cell membrane. Light-driven proton pump. It may interact with bacterioruberin in the claret membrane. This is Archaerhodopsin-1 from Halorubrum ezzemoulense (Halorubrum chaoviator).